Reading from the N-terminus, the 420-residue chain is Protein-lysine 6-oxidase (420 aa).

The signal sequence occupies residues 1 to 27; the sequence is MRCAPPGLLLAQLHACIFWSGLWPAGC. A propeptide spans 28–171 (removed by BMP1); that stretch reads QSPPAAWRQR…RPGREDVMVG (144 aa). Positions 54 to 177 are disordered; sequence AQYQPPRRRQ…VMVGDDPYSP (124 aa). N-linked (GlcNAc...) asparagine glycosylation occurs at Asn78. A compositionally biased stretch (low complexity) spans 82 to 92; the sequence is PRAAAAAAARP. The segment covering 93–105 has biased composition (pro residues); that stretch reads QPEPQPQAQPQPR. Basic residues-rich tracts occupy residues 107 to 119 and 134 to 147; these read RSSRRQPLGRRHW and APRRRPRGRRSRRR. Tyr190 carries the sulfotyrosine modification. A lysyl-oxidase like region spans residues 216–420; the sequence is PDLVPDPYYI…YASGCTISPY (205 aa). 5 disulfide bridges follow: Cys241/Cys247, Cys294/Cys343, Cys327/Cys333, Cys354/Cys364, and Cys401/Cys415. Positions 295, 297, and 299 each coordinate Cu cation. The segment at residues 323-358 is a cross-link (lysine tyrosylquinone (Lys-Tyr)); the sequence is KASFCLEDTSCDYGYYRRYACTAHTQGLSPGCYDTY. A 2',4',5'-topaquinone modification is found at Tyr358.

This sequence belongs to the lysyl oxidase family. The cofactor is Cu cation. Lysine tyrosylquinone residue serves as cofactor. In terms of processing, the lysine tyrosylquinone cross-link (LTQ) is generated by condensation of the epsilon-amino group of a lysine with a topaquinone produced by oxidation of tyrosine. Post-translationally, proteolytically cleaved by BMP1 which removes the propeptide. Also proteolytically cleaved by ADAMTS2 and ADAMTS14, but not by ADAMTS3, at an additional cleavage site downstream of the BMP1 cleavage site. The propeptide plays a role in directing the deposition of this enzyme to elastic fibers, via interaction with tropoelastin. Cleavage by BMP1 to remove the propeptide does not increase enzymatic activity but increases binding to collagen. Cleavage by ADAMTS2 produces a form with reduced collagen-binding activity. Sulfated at Tyr-190 and also at either Tyr-186 or Tyr-187 which enhances binding to collagen.

Its subcellular location is the secreted. It is found in the extracellular space. It carries out the reaction L-lysyl-[protein] + O2 + H2O = (S)-2-amino-6-oxohexanoyl-[protein] + H2O2 + NH4(+). Functionally, responsible for the post-translational oxidative deamination of peptidyl lysine residues in precursors to fibrous collagen and elastin. Its function is as follows. In addition to cross linking of extracellular matrix proteins, it may have a direct role in tumor suppression. The chain is Protein-lysine 6-oxidase (LOX) from Gallus gallus (Chicken).